The following is a 565-amino-acid chain: Proline--tRNA ligase (565 aa).

Belongs to the class-II aminoacyl-tRNA synthetase family. ProS type 1 subfamily. Homodimer.

The protein localises to the cytoplasm. The catalysed reaction is tRNA(Pro) + L-proline + ATP = L-prolyl-tRNA(Pro) + AMP + diphosphate. Catalyzes the attachment of proline to tRNA(Pro) in a two-step reaction: proline is first activated by ATP to form Pro-AMP and then transferred to the acceptor end of tRNA(Pro). As ProRS can inadvertently accommodate and process non-cognate amino acids such as alanine and cysteine, to avoid such errors it has two additional distinct editing activities against alanine. One activity is designated as 'pretransfer' editing and involves the tRNA(Pro)-independent hydrolysis of activated Ala-AMP. The other activity is designated 'posttransfer' editing and involves deacylation of mischarged Ala-tRNA(Pro). The misacylated Cys-tRNA(Pro) is not edited by ProRS. The protein is Proline--tRNA ligase of Campylobacter lari (strain RM2100 / D67 / ATCC BAA-1060).